Reading from the N-terminus, the 169-residue chain is Acetolactate synthase small subunit (169 aa).

One can recognise an ACT domain in the interval 8–85 (TLSVLVEDTP…KVVEQEADNS (78 aa)).

This sequence belongs to the acetolactate synthase small subunit family. In terms of assembly, dimer of large and small chains.

The enzyme catalyses 2 pyruvate + H(+) = (2S)-2-acetolactate + CO2. The protein operates within amino-acid biosynthesis; L-isoleucine biosynthesis; L-isoleucine from 2-oxobutanoate: step 1/4. Its pathway is amino-acid biosynthesis; L-valine biosynthesis; L-valine from pyruvate: step 1/4. The sequence is that of Acetolactate synthase small subunit (ilvH) from Mycobacterium leprae (strain TN).